A 370-amino-acid chain; its full sequence is Ferrochelatase (370 aa).

Fe cation contacts are provided by His210 and Glu291.

Belongs to the ferrochelatase family.

It is found in the cytoplasm. The enzyme catalyses heme b + 2 H(+) = protoporphyrin IX + Fe(2+). Its pathway is porphyrin-containing compound metabolism; protoheme biosynthesis; protoheme from protoporphyrin-IX: step 1/1. Catalyzes the ferrous insertion into protoporphyrin IX. This chain is Ferrochelatase, found in Marinobacter nauticus (strain ATCC 700491 / DSM 11845 / VT8) (Marinobacter aquaeolei).